Here is a 317-residue protein sequence, read N- to C-terminus: Retinol dehydrogenase 16 (317 aa).

33–57 (FITGCDSGFGTLLARQLDRRGMRVL) contributes to the NAD(+) binding site. The Proton acceptor role is filled by Tyr176. The chain crosses the membrane as a helical span at residues 289-309 (LFYLPLSYLPTFLVDALLYWT).

The protein belongs to the short-chain dehydrogenases/reductases (SDR) family. In terms of assembly, homodimer. Not glycosylated.

The protein resides in the endoplasmic reticulum membrane. The protein localises to the microsome membrane. The enzyme catalyses all-trans-retinol--[retinol-binding protein] + NAD(+) = all-trans-retinal--[retinol-binding protein] + NADH + H(+). It carries out the reaction 9-cis-retinol + NAD(+) = 9-cis-retinal + NADH + H(+). The catalysed reaction is 11-cis-retinol + NAD(+) = 11-cis-retinal + NADH + H(+). It catalyses the reaction 13-cis-retinol + NAD(+) = 13-cis-retinal + NADH + H(+). The enzyme catalyses androsterone + NAD(+) = 5alpha-androstan-3,17-dione + NADH + H(+). It carries out the reaction 5alpha-androstane-3alpha,17beta-diol + NAD(+) = 17beta-hydroxy-5alpha-androstan-3-one + NADH + H(+). It functions in the pathway cofactor metabolism; retinol metabolism. Its function is as follows. Oxidoreductase with a preference for NAD. Oxidizes all-trans-retinol, 9-cis-retinol, 11-cis-retinol and 13-cis-retinol to the corresponding aldehydes. Has higher activity towards CRBP-bound retinol than with free retinol. Oxidizes 3-alpha-hydroxysteroids. Oxidizes androstanediol and androsterone to dihydrotestosterone and androstanedione. Can also catalyze the reverse reaction. The protein is Retinol dehydrogenase 16 of Mus musculus (Mouse).